The following is a 500-amino-acid chain: Lysine--tRNA ligase (500 aa).

Residues Glu-407 and Glu-414 each contribute to the Mg(2+) site.

It belongs to the class-II aminoacyl-tRNA synthetase family. In terms of assembly, homodimer. It depends on Mg(2+) as a cofactor.

The protein localises to the cytoplasm. It catalyses the reaction tRNA(Lys) + L-lysine + ATP = L-lysyl-tRNA(Lys) + AMP + diphosphate. The polypeptide is Lysine--tRNA ligase (Azobacteroides pseudotrichonymphae genomovar. CFP2).